A 247-amino-acid polypeptide reads, in one-letter code: Homeobox-leucine zipper protein HOX15 (247 aa).

The segment at 1 to 44 is disordered; sequence MAQDDEDVGLALGLSLGSGGHRRQRESRDEAPSSAAASLLTLRL. Positions 32–44 are enriched in low complexity; it reads PSSAAASLLTLRL. Residues 91 to 150 constitute a DNA-binding region (homeobox); that stretch reads NSRKKLRLSKEQSALLEDRFKEHSTLNPKQKVALAKQLNLRPRQVEVWFQNRRARTKLKQ. The tract at residues 149–193 is leucine-zipper; the sequence is KQTEVDCELLKRCCETLTEENRRLHRELQQLRALTHSTAAGFFMA. Residues 221-247 are disordered; that stretch reads SPTAAADRTNKPTAPHLFSPFAKSAAC.

Belongs to the HD-ZIP homeobox family. Class II subfamily. As to expression, expressed in seedlings, stems, leaf blades and panicles.

It localises to the nucleus. Probable transcription factor. The protein is Homeobox-leucine zipper protein HOX15 (HOX15) of Oryza sativa subsp. japonica (Rice).